Here is a 325-residue protein sequence, read N- to C-terminus: tRNA dimethylallyltransferase (325 aa).

ATP is bound at residue 21–28; the sequence is GPTASGKS. 23-28 serves as a coordination point for substrate; that stretch reads TASGKS. Residues 166-170 are interaction with substrate tRNA; that stretch reads QRLAR.

Belongs to the IPP transferase family. Monomer. Mg(2+) serves as cofactor.

It carries out the reaction adenosine(37) in tRNA + dimethylallyl diphosphate = N(6)-dimethylallyladenosine(37) in tRNA + diphosphate. Its function is as follows. Catalyzes the transfer of a dimethylallyl group onto the adenine at position 37 in tRNAs that read codons beginning with uridine, leading to the formation of N6-(dimethylallyl)adenosine (i(6)A). This is tRNA dimethylallyltransferase from Acidiphilium cryptum (strain JF-5).